Reading from the N-terminus, the 807-residue chain is Probable E3 ubiquitin-protein ligase mug30 (807 aa).

Residues 453–807 (RNKDFRKALK…LLETNGFNIR (355 aa)) form the HECT domain. Catalysis depends on Cys775, which acts as the Glycyl thioester intermediate.

Its subcellular location is the cytoplasm. It localises to the cytoskeleton. The protein localises to the microtubule organizing center. It is found in the spindle pole body. The enzyme catalyses S-ubiquitinyl-[E2 ubiquitin-conjugating enzyme]-L-cysteine + [acceptor protein]-L-lysine = [E2 ubiquitin-conjugating enzyme]-L-cysteine + N(6)-ubiquitinyl-[acceptor protein]-L-lysine.. It functions in the pathway protein modification; protein ubiquitination. In terms of biological role, probable E3 ubiquitin-protein ligase. Has a role in meiosis. In Schizosaccharomyces pombe (strain 972 / ATCC 24843) (Fission yeast), this protein is Probable E3 ubiquitin-protein ligase mug30 (mug30).